The chain runs to 448 residues: Glutamyl-tRNA(Gln) amidotransferase subunit D (448 aa).

Positions 92–423 (SEVKIISTGG…DKIRSLMLTN (332 aa)) constitute an Asparaginase/glutaminase domain. Residues Thr-102, Thr-178, Asp-179, and Lys-257 contribute to the active site.

The protein belongs to the asparaginase 1 family. GatD subfamily. Heterodimer of GatD and GatE.

The catalysed reaction is L-glutamyl-tRNA(Gln) + L-glutamine + ATP + H2O = L-glutaminyl-tRNA(Gln) + L-glutamate + ADP + phosphate + H(+). Functionally, allows the formation of correctly charged Gln-tRNA(Gln) through the transamidation of misacylated Glu-tRNA(Gln) in organisms which lack glutaminyl-tRNA synthetase. The reaction takes place in the presence of glutamine and ATP through an activated gamma-phospho-Glu-tRNA(Gln). The GatDE system is specific for glutamate and does not act on aspartate. In Sulfurisphaera tokodaii (strain DSM 16993 / JCM 10545 / NBRC 100140 / 7) (Sulfolobus tokodaii), this protein is Glutamyl-tRNA(Gln) amidotransferase subunit D.